A 504-amino-acid chain; its full sequence is UNC93-like protein C922.05c (504 aa).

Transmembrane regions (helical) follow at residues 64–84 (IIVSWVCFLCPGMFNALSGLG), 97–116 (ANVALYSTFAGLGFFAGSIC), 123–145 (LTLAIGGTGYSVYTASLLCYKHV), 149–169 (GFVIFGGCYLGLTAGMLWAAQ), 186–206 (IAIFWGIFNLGAVIGSIVPLA), 219–239 (GTYAGFIVLMAVGSALALFMV), 275–293 (YWVLLLFPMFFSSNWFTTY), 310–330 (LNNLLYWFAQIMGSAVAALFL), 343–363 (VGWGLVFVLICVIWGGGLAFQ), 391–411 (FLYIFYGMLDAIFQSYAYWII), and 452–472 (YFASCWALLCGSLIVASPVIW).

This sequence belongs to the unc-93 family.

It is found in the cytoplasm. The protein resides in the membrane. The chain is UNC93-like protein C922.05c from Schizosaccharomyces pombe (strain 972 / ATCC 24843) (Fission yeast).